A 157-amino-acid polypeptide reads, in one-letter code: Transcription elongation factor GreA (157 aa).

Residues 13 to 75 (RARLEAELEE…EIKSILARAQ (63 aa)) adopt a coiled-coil conformation.

This sequence belongs to the GreA/GreB family.

Functionally, necessary for efficient RNA polymerase transcription elongation past template-encoded arresting sites. The arresting sites in DNA have the property of trapping a certain fraction of elongating RNA polymerases that pass through, resulting in locked ternary complexes. Cleavage of the nascent transcript by cleavage factors such as GreA or GreB allows the resumption of elongation from the new 3'terminus. GreA releases sequences of 2 to 3 nucleotides. The polypeptide is Transcription elongation factor GreA (Roseiflexus castenholzii (strain DSM 13941 / HLO8)).